The primary structure comprises 520 residues: Peptide chain release factor 3 (520 aa).

Residues 8–277 enclose the tr-type G domain; that stretch reads ESRKTFAIIS…HAPMPNARQT (270 aa). GTP-binding positions include 17-24, 85-89, and 139-142; these read SHPDAGKT, DTPGH, and NKLD.

Belongs to the TRAFAC class translation factor GTPase superfamily. Classic translation factor GTPase family. PrfC subfamily.

Its subcellular location is the cytoplasm. Increases the formation of ribosomal termination complexes and stimulates activities of RF-1 and RF-2. It binds guanine nucleotides and has strong preference for UGA stop codons. It may interact directly with the ribosome. The stimulation of RF-1 and RF-2 is significantly reduced by GTP and GDP, but not by GMP. The polypeptide is Peptide chain release factor 3 (Staphylococcus haemolyticus (strain JCSC1435)).